We begin with the raw amino-acid sequence, 299 residues long: Probable endonuclease 4 (299 aa).

Residues H68, H110, E145, D179, H182, H214, D227, H229, and E259 each contribute to the Zn(2+) site.

Belongs to the AP endonuclease 2 family. The cofactor is Zn(2+).

It carries out the reaction Endonucleolytic cleavage to 5'-phosphooligonucleotide end-products.. Functionally, endonuclease IV plays a role in DNA repair. It cleaves phosphodiester bonds at apurinic or apyrimidinic (AP) sites, generating a 3'-hydroxyl group and a 5'-terminal sugar phosphate. This Exiguobacterium sibiricum (strain DSM 17290 / CCUG 55495 / CIP 109462 / JCM 13490 / 255-15) protein is Probable endonuclease 4.